A 224-amino-acid polypeptide reads, in one-letter code: Non-structural protein V (224 aa).

Over residues 54-65 (QKNIQHPTASHQ) the composition is skewed to polar residues. Disordered regions lie at residues 54-96 (QKNI…DPEP) and 150-171 (TEFK…GGHR). Zn(2+) contacts are provided by His170, Cys189, Cys193, Cys205, Cys207, Cys210, Cys214, and Cys217.

This sequence belongs to the paramyxoviruses V protein family. In terms of assembly, interacts with host IFIH1/MDA5 and DHX58/LGP2. Forms with host DDB1, CUL4A, STAT1, STAT2 and STAT3 the mumps virus V-dependent complex (VDC).

It localises to the virion. It is found in the host cytoplasm. Plays an essential role in the inhibition of host immune response. Prevents the establishment of cellular antiviral state by blocking interferon-alpha/beta (IFN-alpha/beta) production and signaling pathway. Interacts with host IFIH1/MDA5 and DHX58/LGP2 to inhibit the transduction pathway involved in the activation of IFN-beta promoter, thus protecting the virus against cell antiviral state. Blocks the type I and II interferon signaling pathways by interacting with host STAT1, STAT2 and STAT3, and mediating their ubiquitination and subsequent proteasomal degradation. The sequence is that of Non-structural protein V from Mumps virus (strain SBL) (MuV).